The following is a 335-amino-acid chain: Glycerol-3-phosphate dehydrogenase [NAD(P)+] (335 aa).

Residues S10, F11, R31, and K105 each contribute to the NADPH site. The sn-glycerol 3-phosphate site is built by K105, G136, and S138. A140 serves as a coordination point for NADPH. K191, D244, S254, R255, and N256 together coordinate sn-glycerol 3-phosphate. Catalysis depends on K191, which acts as the Proton acceptor. Residue R255 coordinates NADPH. NADPH is bound by residues V279 and E281.

It belongs to the NAD-dependent glycerol-3-phosphate dehydrogenase family.

The protein localises to the cytoplasm. The enzyme catalyses sn-glycerol 3-phosphate + NAD(+) = dihydroxyacetone phosphate + NADH + H(+). It catalyses the reaction sn-glycerol 3-phosphate + NADP(+) = dihydroxyacetone phosphate + NADPH + H(+). The protein operates within membrane lipid metabolism; glycerophospholipid metabolism. Functionally, catalyzes the reduction of the glycolytic intermediate dihydroxyacetone phosphate (DHAP) to sn-glycerol 3-phosphate (G3P), the key precursor for phospholipid synthesis. The polypeptide is Glycerol-3-phosphate dehydrogenase [NAD(P)+] (Leptospira borgpetersenii serovar Hardjo-bovis (strain JB197)).